A 494-amino-acid polypeptide reads, in one-letter code: MASGILGSIKEEVTCPICLELLTEPLSLDCGHSFCQACITANHKESMLHQGERSCPLCRLPYQSENLRPNRHLASIVERLREVMLRPEERQNVDHCARHGEKLLLFCEQDGNIICWLCERSQEHRGHNTFLVEEVAQKYREKLQVALETMRQKQQDAEKLEADVRQEQASWKIQIQNDKTNIMAEFKQLRDILDCEESNELQNLEKEEKNILKRLVQSENDMVLQTQSVRVLISDLERRLQGSVVELLQDVDGVIKRIEKVTLQKPKTFLNEKRRVFRAPDLKRMLQVLKELTEVQRYWAHVTLVPSHPSYTIISEDGRQVRYQKPIRHLLVKVQYFYGVLGSPSITSGKHYWEVDVSNKRAWTLGVCVSLKCTANQSVSGTENYQPKNGYWVIGLRNAGNYRAFQSSFEFRDFLAGSRLTLSPPLIVPLFMTICPNRVGVFLDYEARTISFFNVTSNGFLIYKFSDCHFSYPVFPYFNPMTCELPMTLCSPSS.

N-acetylalanine is present on Ala2. The segment at Cys15–Arg59 adopts an RING-type zinc-finger fold. The B box-type zinc finger occupies Gln91 to Val132. 4 residues coordinate Zn(2+): Cys96, His99, Cys118, and His124. Residues Val132 to Val223 adopt a coiled-coil conformation. Positions Phe186–Asn199 are required for interaction with GABARAP and for autophagy. The B30.2/SPRY domain occupies Pro280 to Ser494.

The protein belongs to the TRIM/RBCC family. In terms of assembly, can form homodimers and homotrimers. In addition to lower-order dimerization, also exhibits a higher-order multimerization and both low- and high-order multimerizations are essential for its restriction activity. Interacts with BTBD1 and BTBD2. Interacts with PSMC4, PSMC5, PSMD7 and HSPA8/HSC70. Interacts (via B30.2/SPRY domain) with HSPA1A/B. Interacts with PSMC2, MAP3K7/TAK1, TAB2 and TAB3. Interacts with SQSTM1. Interacts with TRIM6 and TRIM34. Interacts with ULK1 (phosphorylated form), GABARAP, GABARAPL1, GABARAPL2, MAP1LC3A, MAP1LC3C and BECN1. Degraded in a proteasome-independent fashion in the absence of viral infection but in a proteasome-dependent fashion following exposure to restriction sensitive virus. In terms of processing, autoubiquitinated in a RING finger- and UBE2D2-dependent manner. Monoubiquitinated by TRIM21. Deubiquitinated by Yersinia YopJ. Ubiquitination may not lead to proteasomal degradation.

The protein resides in the cytoplasm. It is found in the nucleus. It catalyses the reaction S-ubiquitinyl-[E2 ubiquitin-conjugating enzyme]-L-cysteine + [acceptor protein]-L-lysine = [E2 ubiquitin-conjugating enzyme]-L-cysteine + N(6)-ubiquitinyl-[acceptor protein]-L-lysine.. The protein operates within protein modification; protein ubiquitination. Its function is as follows. Capsid-specific restriction factor that prevents infection from non-host-adapted retroviruses. Blocks viral replication early in the life cycle, after viral entry but before reverse transcription. In addition to acting as a capsid-specific restriction factor, also acts as a pattern recognition receptor that activates innate immune signaling in response to the retroviral capsid lattice. Binding to the viral capsid triggers its E3 ubiquitin ligase activity, and in concert with the heterodimeric ubiquitin conjugating enzyme complex UBE2V1-UBE2N (also known as UBC13-UEV1A complex) generates 'Lys-63'-linked polyubiquitin chains, which in turn are catalysts in the autophosphorylation of the MAP3K7/TAK1 complex (includes TAK1, TAB2, and TAB3). Activation of the MAP3K7/TAK1 complex by autophosphorylation results in the induction and expression of NF-kappa-B and MAPK-responsive inflammatory genes, thereby leading to an innate immune response in the infected cell. Plays a role in regulating autophagy through activation of autophagy regulator BECN1 by causing its dissociation from its inhibitors BCL2 and TAB2. This is Tripartite motif-containing protein 5 (TRIM5) from Saimiri boliviensis boliviensis (Bolivian squirrel monkey).